Here is a 419-residue protein sequence, read N- to C-terminus: Gamma-glutamyl phosphate reductase (419 aa).

It belongs to the gamma-glutamyl phosphate reductase family.

It is found in the cytoplasm. The enzyme catalyses L-glutamate 5-semialdehyde + phosphate + NADP(+) = L-glutamyl 5-phosphate + NADPH + H(+). Its pathway is amino-acid biosynthesis; L-proline biosynthesis; L-glutamate 5-semialdehyde from L-glutamate: step 2/2. Functionally, catalyzes the NADPH-dependent reduction of L-glutamate 5-phosphate into L-glutamate 5-semialdehyde and phosphate. The product spontaneously undergoes cyclization to form 1-pyrroline-5-carboxylate. The polypeptide is Gamma-glutamyl phosphate reductase (Azoarcus sp. (strain BH72)).